The following is a 156-amino-acid chain: Aspartate carbamoyltransferase regulatory chain (156 aa).

Residues Cys-109, Cys-114, Cys-140, and Cys-143 each contribute to the Zn(2+) site.

The protein belongs to the PyrI family. As to quaternary structure, contains catalytic and regulatory chains. The cofactor is Zn(2+).

In terms of biological role, involved in allosteric regulation of aspartate carbamoyltransferase. This Methanosarcina acetivorans (strain ATCC 35395 / DSM 2834 / JCM 12185 / C2A) protein is Aspartate carbamoyltransferase regulatory chain.